The chain runs to 428 residues: D-amino acid dehydrogenase (428 aa).

3 to 17 (VVILGSGVVGVASAY) serves as a coordination point for FAD.

It belongs to the DadA oxidoreductase family. FAD serves as cofactor.

The enzyme catalyses a D-alpha-amino acid + A + H2O = a 2-oxocarboxylate + AH2 + NH4(+). Its pathway is amino-acid degradation; D-alanine degradation; NH(3) and pyruvate from D-alanine: step 1/1. In terms of biological role, oxidative deamination of D-amino acids. In Burkholderia mallei (strain NCTC 10247), this protein is D-amino acid dehydrogenase.